A 545-amino-acid chain; its full sequence is Capsular polysaccharide phosphotransferase SacB (545 aa).

It belongs to the stealth family.

May be the polymerase that links individual UDP-N-acetyl-D-mannosamine monomers. In serotype A the capsule is composed of repeated units of (alpha 1-6)-linked N-acetyl-D-mannosamine-1-phosphate. The sequence is that of Capsular polysaccharide phosphotransferase SacB (sacB) from Neisseria meningitidis serogroup A.